A 399-amino-acid chain; its full sequence is MEPAGLCGFCPAGEALPARYTCPRCNAPYCSLRCYRAHGACAEDFYRDQVLRELRGRSASPSRLAGALRRLREQREAEDEPEEAGLGPGARPGGLSGLWERLTPAEKAAFERLLSRGEAGRLLPPWRPWWWGRGTGPRLLEELDHAANRDLAEPEPAPARTALQSGDDAAAAEPFAEDSCAARPLALPARIPALASLSRSPASPLVRFQLPNVLFAYAHTLALYHGGDDDALLSDFCATLLDVSGALGAQQVFGSTEEALQAAAHVLEAGEHPPGPLGTRGAMQEVARILLGEGPVNQKGYTLTALGHLAQTLGRARKQAVIGGERDRLYRARKKCQFLLAWTNENEAALTPLALDCARAHRAHAVTAEEMATLTGELERLWGGPVPPTPRTLIEELPG.

At M1 the chain carries N-acetylmethionine. 8 residues coordinate Zn(2+): C7, C10, C22, C25, C30, C34, H38, and C41. Residues 7 to 41 (CGFCPAGEALPARYTCPRCNAPYCSLRCYRAHGAC) form an HIT-type zinc finger. Disordered regions lie at residues 70–97 (RLRE…GLSG) and 152–175 (AEPE…AEPF). Over residues 86–96 (LGPGARPGGLS) the composition is skewed to gly residues. A Phosphothreonine modification is found at T161.

In terms of assembly, interacts (via HIT-type zinc finger) with RUVBL2 in the presence of ATP or ADP; shows a stronger interaction in the presence of ADP. Low expression in most tissues; highly expressed in testis; particularly in seminiferous tubules.

Functionally, may act as a bridging factor mediating the interaction between the R2TP/Prefoldin-like (R2TP/PFDL) complex and U5 small nuclear ribonucleoprotein (U5 snRNP). Required for the interaction of R2TP complex subunit RPAP3 and prefoldin-like subunit URI1 with U5 snRNP proteins EFTUD2 and PRPF8. May play a role in regulating the composition of the U5 snRNP complex. The chain is Zinc finger HIT domain-containing protein 2 (Znhit2) from Mus musculus (Mouse).